A 444-amino-acid polypeptide reads, in one-letter code: METILQNVPVGQKVGIAFSGGLDTSAALRWMKNKGALPYAYTANLGQPDEADYDEIPRKAMEYGAEQARLIDCRSQLAGEGIAAIQAGAFHISTGGITYFNTTPLGRAVTGTMLVAAMKEDDVNIWGDGSTFKGNDIERFYRYGLLTNPALKIYKPWLDQTFIDELGGRAEMSAFMTKEGFGYKMSAEKAYSTDSNMLGATHEAKDLEFLNSGIRIVNPIMGVAFWKPEVEVKAEEVSVTFDEGRPVAINGKEIADPVELFLEANRIGGRHGLGMSDQIENRIIEAKSRGIYEAPGMALLHIAYERLVTGIHNEDTIEQYRINGLRLGRLLYQGRWFDPQAIMLRETAQRWVARAVTGTVTLELRRGNDYSILNTESPNLTYAPERLSMEKVEDAPFSPADRIGQLTMRNLDLMDTRDKLAIYAKAGLLSLGTSTALPQLGGKE.

Residues 17–25 (AFSGGLDTS) and A43 each bind ATP. Y99 provides a ligand contact to L-citrulline. Residues G129 and T131 each coordinate ATP. Positions 131, 135, and 136 each coordinate L-aspartate. Position 135 (N135) interacts with L-citrulline. D136 provides a ligand contact to ATP. The L-citrulline site is built by R139 and S192. D194 lines the ATP pocket. Positions 201, 203, and 280 each coordinate L-citrulline.

Belongs to the argininosuccinate synthase family. Type 2 subfamily. As to quaternary structure, homotetramer.

The protein localises to the cytoplasm. It catalyses the reaction L-citrulline + L-aspartate + ATP = 2-(N(omega)-L-arginino)succinate + AMP + diphosphate + H(+). Its pathway is amino-acid biosynthesis; L-arginine biosynthesis; L-arginine from L-ornithine and carbamoyl phosphate: step 2/3. In Delftia acidovorans (strain DSM 14801 / SPH-1), this protein is Argininosuccinate synthase.